Consider the following 248-residue polypeptide: Something about silencing protein 5 (248 aa).

The YEATS domain occupies 1–139 (MDHSIEVTFR…SELSKYFDLP (139 aa)). A Phosphoserine modification is found at S144. A disordered region spans residues 223 to 248 (TKQERTNFGSDAIHKDEPVKAHNKLK).

As to quaternary structure, component of the SAS complex, at least composed of SAS2, SAS4 and SAS5. These three proteins constitute the core of the complex, and are sufficient to acetylate histones.

It localises to the nucleus. In terms of biological role, component of the SAS complex, a multiprotein complex that acetylates 'Lys-16' of histone H4 and 'Lys-14' of histone H3. The SAS complex is however unable to acetylate nucleosomal histones. The complex is involved in transcriptional silencing at telomeres and at HML locus. Also involved in rDNA silencing. In the complex, SAS5 is required for maximal histone acetyltransferase (HAT) activity of the complex, suggesting that it may be required to stabilize the complex or help in substrate recognition. In Saccharomyces cerevisiae (strain ATCC 204508 / S288c) (Baker's yeast), this protein is Something about silencing protein 5 (SAS5).